A 654-amino-acid chain; its full sequence is Fructose-1,6-bisphosphatase class 3 (654 aa).

The tract at residues 288 to 307 is disordered; that stretch reads NPAFKPKKRPDKHERLTQRE. Residues 298 to 307 are compositionally biased toward basic and acidic residues; it reads DKHERLTQRE.

It belongs to the FBPase class 3 family. Requires Mn(2+) as cofactor.

The catalysed reaction is beta-D-fructose 1,6-bisphosphate + H2O = beta-D-fructose 6-phosphate + phosphate. It functions in the pathway carbohydrate biosynthesis; gluconeogenesis. The polypeptide is Fructose-1,6-bisphosphatase class 3 (Staphylococcus aureus (strain MRSA252)).